The primary structure comprises 197 residues: Large ribosomal subunit protein bL25 (197 aa).

It belongs to the bacterial ribosomal protein bL25 family. CTC subfamily. In terms of assembly, part of the 50S ribosomal subunit; part of the 5S rRNA/L5/L18/L25 subcomplex. Contacts the 5S rRNA. Binds to the 5S rRNA independently of L5 and L18.

Functionally, this is one of the proteins that binds to the 5S RNA in the ribosome where it forms part of the central protuberance. The sequence is that of Large ribosomal subunit protein bL25 from Lawsonia intracellularis (strain PHE/MN1-00).